Reading from the N-terminus, the 117-residue chain is Large ribosomal subunit protein bL20 (117 aa).

It belongs to the bacterial ribosomal protein bL20 family.

Binds directly to 23S ribosomal RNA and is necessary for the in vitro assembly process of the 50S ribosomal subunit. It is not involved in the protein synthesizing functions of that subunit. This chain is Large ribosomal subunit protein bL20, found in Carboxydothermus hydrogenoformans (strain ATCC BAA-161 / DSM 6008 / Z-2901).